The sequence spans 343 residues: TATA box-binding protein-like 2 (343 aa).

Positions 71-152 are disordered; the sequence is PDEVTQENKD…SDSLSLASIT (82 aa). Over residues 76 to 90 the composition is skewed to basic and acidic residues; sequence QENKDQPVISKHETE. Residues 94-127 are compositionally biased toward low complexity; that stretch reads ESQSPQSRLPSPSEQDVGLGLNSSSLSNSHSQLH. Over residues 143–152 the composition is skewed to polar residues; that stretch reads SDSLSLASIT.

This sequence belongs to the TBP family. Interacts with TAF3. As to expression, ubiquitously expressed in all tissues examined with highest levels in heart, lung, ovary, spleen and testes.

Its subcellular location is the cytoplasm. It is found in the nucleus. In terms of biological role, transcription factor required in complex with TAF3 for the differentiation of myoblasts into myocytes. The complex replaces TFIID at specific promoters at an early stage in the differentiation process. This chain is TATA box-binding protein-like 2, found in Homo sapiens (Human).